Here is a 337-residue protein sequence, read N- to C-terminus: tRNA N6-adenosine threonylcarbamoyltransferase (337 aa).

Fe cation-binding residues include histidine 110 and histidine 114. Residues 132 to 136, aspartate 165, glycine 178, aspartate 182, and asparagine 268 contribute to the substrate site; that span reads VVSGG. Aspartate 293 contacts Fe cation.

The protein belongs to the KAE1 / TsaD family. The cofactor is Fe(2+).

The protein localises to the cytoplasm. It catalyses the reaction L-threonylcarbamoyladenylate + adenosine(37) in tRNA = N(6)-L-threonylcarbamoyladenosine(37) in tRNA + AMP + H(+). Required for the formation of a threonylcarbamoyl group on adenosine at position 37 (t(6)A37) in tRNAs that read codons beginning with adenine. Is involved in the transfer of the threonylcarbamoyl moiety of threonylcarbamoyl-AMP (TC-AMP) to the N6 group of A37, together with TsaE and TsaB. TsaD likely plays a direct catalytic role in this reaction. The polypeptide is tRNA N6-adenosine threonylcarbamoyltransferase (Sulfurihydrogenibium sp. (strain YO3AOP1)).